A 78-amino-acid chain; its full sequence is MTDSIPKKPLKKGSLVFVDKENYIKSIEALASDHDLPNYVFEGPGEILSVKDEYAQIRWRRPVPDVWFKLEQLKEYLQ.

It belongs to the complex I NdhO subunit family. In terms of assembly, NDH-1 can be composed of about 15 different subunits; different subcomplexes with different compositions have been identified which probably have different functions.

It localises to the cellular thylakoid membrane. It catalyses the reaction a plastoquinone + NADH + (n+1) H(+)(in) = a plastoquinol + NAD(+) + n H(+)(out). The catalysed reaction is a plastoquinone + NADPH + (n+1) H(+)(in) = a plastoquinol + NADP(+) + n H(+)(out). Functionally, NDH-1 shuttles electrons from an unknown electron donor, via FMN and iron-sulfur (Fe-S) centers, to quinones in the respiratory and/or the photosynthetic chain. The immediate electron acceptor for the enzyme in this species is believed to be plastoquinone. Couples the redox reaction to proton translocation, and thus conserves the redox energy in a proton gradient. Cyanobacterial NDH-1 also plays a role in inorganic carbon-concentration. The protein is NAD(P)H-quinone oxidoreductase subunit O of Prochlorococcus marinus (strain MIT 9301).